The following is a 337-amino-acid chain: C5a anaphylatoxin chemotactic receptor 2 (337 aa).

Over 1-38 (MGNDSVSYEYGDYSDLSDRPVDCLDGACLAIDPLRVAP) the chain is Extracellular. The N-linked (GlcNAc...) asparagine glycan is linked to Asn-3. A helical transmembrane segment spans residues 39-61 (LPLYAAIFLVGVPGNAMVAWVAG). At 62 to 72 (KVARRRVGATW) the chain is on the cytoplasmic side. The chain crosses the membrane as a helical span at residues 73 to 95 (LLHLAVADLLCCLSLPILAVPIA). Residues 96-114 (RGGHWPYGAVGCRALPSII) are Extracellular-facing. A disulfide bond links Cys-107 and Cys-186. Residues 115–137 (LLTMYASVLLLAALSADLCFLAL) traverse the membrane as a helical segment. Topologically, residues 138-149 (GPAWWSTVQRAC) are cytoplasmic. A helical membrane pass occupies residues 150-172 (GVQVACGAAWTLALLLTVPSAIY). Residues 173–202 (RRLHQEHFPARLQCVVDYGGSSSTENAVTA) are Extracellular-facing. A helical membrane pass occupies residues 203–225 (IRFLFGFLGPLVAVASCHSALLC). At 226–237 (WAARRCRPLGTA) the chain is on the cytoplasmic side. A helical membrane pass occupies residues 238-260 (IVVGFFVCWAPYHLLGLVLTVAA). Residues 261 to 274 (PNSALLARALRAEP) lie on the Extracellular side of the membrane. The chain crosses the membrane as a helical span at residues 275–294 (LIVGLALAHSCLNPMLFLYF). Residues 295–337 (GRAQLRRSLPAACHWALRESQGQDESVDSKKSTSHDLVSEMEV) lie on the Cytoplasmic side of the membrane. At Ser-320 the chain carries Phosphoserine.

The protein belongs to the G-protein coupled receptor 1 family. Interacts with C3 (the anaphylatoxin peptide C3a and the adipogenic hormone ASP); the interaction occurs with higher affinity for ASP, enhancing the phosphorylation and activation of GPR77, recruitment of ARRB2 to the cell surface and endocytosis of GRP77. Frontal cortex, hippocampus, hypothalamus, pons and liver.

The protein localises to the cell membrane. Its function is as follows. Receptor for the chemotactic and inflammatory C3a, C4a and C5a anaphylatoxin peptides and also for their dearginated forms ASP/C3adesArg, C4adesArg and C5adesArg respectively. Couples weakly to G(i)-mediated signaling pathways. This is C5a anaphylatoxin chemotactic receptor 2 (C5AR2) from Homo sapiens (Human).